Here is a 226-residue protein sequence, read N- to C-terminus: PKHD-type hydroxylase HNE_2117 (226 aa).

Residues 78 to 178 (TVLTPRFNRY…RLASFLWTQS (101 aa)) form the Fe2OG dioxygenase domain. Residues H96, D98, and H159 each coordinate Fe cation. 2-oxoglutarate is bound at residue R169.

Fe(2+) serves as cofactor. The cofactor is L-ascorbate.

The protein is PKHD-type hydroxylase HNE_2117 of Hyphomonas neptunium (strain ATCC 15444).